Reading from the N-terminus, the 692-residue chain is Potassium-transporting ATPase ATP-binding subunit (692 aa).

The next 4 membrane-spanning stretches (helical) occupy residues 35–55 (VMFI…KDLY), 64–84 (LQIS…EAIA), 213–233 (IALT…VMSL), and 254–274 (ILIS…LSAI). The active-site 4-aspartylphosphate intermediate is the D307. ATP-binding positions include D344, E348, 377–384 (FSASTKMS), and K400. Residues D523 and D527 each contribute to the Mg(2+) site. The next 3 membrane-spanning stretches (helical) occupy residues 592–612 (YFAI…VGPL), 626–646 (AVLS…PLAL), and 672–692 (MVIP…LGII).

It belongs to the cation transport ATPase (P-type) (TC 3.A.3) family. Type IA subfamily. As to quaternary structure, the system is composed of three essential subunits: KdpA, KdpB and KdpC.

The protein resides in the cell inner membrane. The catalysed reaction is K(+)(out) + ATP + H2O = K(+)(in) + ADP + phosphate + H(+). Functionally, part of the high-affinity ATP-driven potassium transport (or Kdp) system, which catalyzes the hydrolysis of ATP coupled with the electrogenic transport of potassium into the cytoplasm. This subunit is responsible for energy coupling to the transport system and for the release of the potassium ions to the cytoplasm. In Leptospira interrogans serogroup Icterohaemorrhagiae serovar Lai (strain 56601), this protein is Potassium-transporting ATPase ATP-binding subunit.